Reading from the N-terminus, the 212-residue chain is Pyrrolidone-carboxylate peptidase (212 aa).

Active-site residues include Glu78, Cys141, and His165.

It belongs to the peptidase C15 family. In terms of assembly, homotetramer.

Its subcellular location is the cytoplasm. It carries out the reaction Release of an N-terminal pyroglutamyl group from a polypeptide, the second amino acid generally not being Pro.. Functionally, removes 5-oxoproline from various penultimate amino acid residues except L-proline. The chain is Pyrrolidone-carboxylate peptidase from Staphylococcus haemolyticus (strain JCSC1435).